We begin with the raw amino-acid sequence, 139 residues long: Class I hydrophobin A (139 aa).

An N-terminal signal peptide occupies residues Met-1–Ala-18. Disulfide bonds link Cys-45–Cys-113, Cys-53–Cys-107, Cys-54–Cys-88, and Cys-114–Cys-133.

This sequence belongs to the fungal hydrophobin family. Self-assembles to form functional amyloid fibrils called rodlets. Self-assembly into fibrillar rodlets occurs spontaneously at hydrophobic:hydrophilic interfaces and the rodlets further associate laterally to form amphipathic monolayers.

It localises to the secreted. The protein resides in the cell wall. Functionally, aerial growth, conidiation, and dispersal of filamentous fungi in the environment rely upon a capability of their secreting small amphipathic proteins called hydrophobins (HPBs) with low sequence identity. Class I can self-assemble into an outermost layer of rodlet bundles on aerial cell surfaces, conferring cellular hydrophobicity that supports fungal growth, development and dispersal; whereas Class II form highly ordered films at water-air interfaces through intermolecular interactions but contribute nothing to the rodlet structure. HYPA is a class I hydrophobin that contributes to surface hydrophobicity, and prevents recognition by the cellular immune defense system. In Arthroderma benhamiae (strain ATCC MYA-4681 / CBS 112371) (Trichophyton mentagrophytes), this protein is Class I hydrophobin A.